Reading from the N-terminus, the 530-residue chain is Ubiquitin carboxyl-terminal hydrolase 17-like protein 13 (530 aa).

The 296-residue stretch at 80–375 (AGLQNMGNTC…QAYVLFYIQK (296 aa)) folds into the USP domain. Cysteine 89 functions as the Nucleophile in the catalytic mechanism. The active-site Proton acceptor is histidine 334. Basic and acidic residues-rich tracts occupy residues 382–392 (SESVSRGREPR) and 398–412 (DTDR…KRDH). Disordered regions lie at residues 382–412 (SESV…KRDH) and 477–530 (NHHP…LVCQ). Polar residues predominate over residues 493–505 (TPTHQESMNTGTL). The span at 510–524 (GRARRSKGKNKHSKR) shows a compositional bias: basic residues.

This sequence belongs to the peptidase C19 family. USP17 subfamily.

The protein localises to the nucleus. It is found in the endoplasmic reticulum. The enzyme catalyses Thiol-dependent hydrolysis of ester, thioester, amide, peptide and isopeptide bonds formed by the C-terminal Gly of ubiquitin (a 76-residue protein attached to proteins as an intracellular targeting signal).. Functionally, deubiquitinating enzyme that removes conjugated ubiquitin from specific proteins to regulate different cellular processes that may include cell proliferation, progression through the cell cycle, apoptosis, cell migration, and the cellular response to viral infection. The sequence is that of Ubiquitin carboxyl-terminal hydrolase 17-like protein 13 (USP17L13) from Homo sapiens (Human).